We begin with the raw amino-acid sequence, 605 residues long: Acetyl-coenzyme A carboxylase carboxyl transferase subunits beta/alpha (605 aa).

The tract at residues 1 to 269 (MFKGLFKKTK…QRAEFLLKHG (269 aa)) is acetyl-coenzyme A carboxylase carboxyl transferase subunit beta. Positions 40 to 306 (LWEKCDSCKS…SRMLDGNDCS (267 aa)) constitute a CoA carboxyltransferase N-terminal domain. Residues 40–570 (LWEKCDSCKS…KNNLLKTLDN (531 aa)) are carboxyltransferase. Positions 44, 47, 63, and 66 each coordinate Zn(2+). A C4-type zinc finger spans residues 44-66 (CDSCKSIIYAEDLKKNYHICHEC). Positions 270–593 (FVDKVINRKE…YEKFRSIGRF (324 aa)) are acetyl-coenzyme A carboxylase carboxyl transferase subunit alpha. One can recognise a CoA carboxyltransferase C-terminal domain in the interval 317–570 (ASAKSVEEIR…KNNLLKTLDN (254 aa)).

In the N-terminal section; belongs to the AccD/PCCB family. The protein in the C-terminal section; belongs to the AccA family. Acetyl-CoA carboxylase is a heterotetramer composed of biotin carboxyl carrier protein (AccB), biotin carboxylase (AccC) and two subunits of ACCase subunit beta/alpha. Requires Zn(2+) as cofactor.

It localises to the cytoplasm. The enzyme catalyses N(6)-carboxybiotinyl-L-lysyl-[protein] + acetyl-CoA = N(6)-biotinyl-L-lysyl-[protein] + malonyl-CoA. The protein operates within lipid metabolism; malonyl-CoA biosynthesis; malonyl-CoA from acetyl-CoA: step 1/1. Functionally, component of the acetyl coenzyme A carboxylase (ACC) complex. Biotin carboxylase (BC) catalyzes the carboxylation of biotin on its carrier protein (BCCP) and then the CO(2) group is transferred by the transcarboxylase to acetyl-CoA to form malonyl-CoA. This chain is Acetyl-coenzyme A carboxylase carboxyl transferase subunits beta/alpha (accD), found in Natranaerobius thermophilus (strain ATCC BAA-1301 / DSM 18059 / JW/NM-WN-LF).